We begin with the raw amino-acid sequence, 152 residues long: Transcriptional repressor NrdR (152 aa).

The segment at 3-33 (CSICKKGETSVVDSRPTEDGTAIRRRRLCVC) is a zinc-finger region. Positions 48–138 (IMVVKKNGRK…VYRNFREEKD (91 aa)) constitute an ATP-cone domain.

This sequence belongs to the NrdR family. The cofactor is Zn(2+).

Its function is as follows. Negatively regulates transcription of bacterial ribonucleotide reductase nrd genes and operons by binding to NrdR-boxes. The sequence is that of Transcriptional repressor NrdR from Pelagibacter ubique (strain HTCC1062).